A 211-amino-acid polypeptide reads, in one-letter code: FMN-dependent NADH:quinone oxidoreductase 2 (211 aa).

102 to 105 contributes to the FMN binding site; the sequence is MWNF.

Belongs to the azoreductase type 1 family. Homodimer. The cofactor is FMN.

It catalyses the reaction 2 a quinone + NADH + H(+) = 2 a 1,4-benzosemiquinone + NAD(+). It carries out the reaction N,N-dimethyl-1,4-phenylenediamine + anthranilate + 2 NAD(+) = 2-(4-dimethylaminophenyl)diazenylbenzoate + 2 NADH + 2 H(+). Functionally, quinone reductase that provides resistance to thiol-specific stress caused by electrophilic quinones. In terms of biological role, also exhibits azoreductase activity. Catalyzes the reductive cleavage of the azo bond in aromatic azo compounds to the corresponding amines. The sequence is that of FMN-dependent NADH:quinone oxidoreductase 2 from Bacillus cereus (strain ATCC 14579 / DSM 31 / CCUG 7414 / JCM 2152 / NBRC 15305 / NCIMB 9373 / NCTC 2599 / NRRL B-3711).